We begin with the raw amino-acid sequence, 166 residues long: Interleukin-3 (166 aa).

The first 27 residues, 1-27 (MVLASSTTSILCMLLPLLMLFHQGLQI), serve as a signal peptide directing secretion. 2 disulfides stabilise this stretch: Cys43–Cys106 and Cys105–Cys166. 2 N-linked (GlcNAc...) asparagine glycosylation sites follow: Asn60 and Asn70. Residues 145 to 166 (SVSRPPQPTSSSDNFRPMTVEC) form a disordered region.

The protein belongs to the IL-3 family. In terms of assembly, monomer. As to expression, activated T-cells, mast cells, natural killer cells.

The protein resides in the secreted. Its function is as follows. Cytokine secreted predominantly by activated T-lymphocytes as well as mast cells and osteoblastic cells that controls the production and differentiation of hematopoietic progenitor cells into lineage-restricted cells. Also stimulates mature basophils, eosinophils, and monocytes to become functionally activated. In addition, plays an important role in neural cell proliferation and survival. Participates as well in bone homeostasis and inhibits osteoclast differentiation by preventing NF-kappa-B nuclear translocation and activation. Mechanistically, exerts its biological effects through a receptor composed of IL3RA subunit and a signal transducing subunit IL3RB. Receptor stimulation results in the rapid activation of JAK2 kinase activity leading to STAT5-mediated transcriptional program. Alternatively, contributes to cell survival under oxidative stress in non-hematopoietic systems by activating pathways mediated by PI3K/AKT and ERK. This Rattus norvegicus (Rat) protein is Interleukin-3 (Il3).